We begin with the raw amino-acid sequence, 1108 residues long: Retinal guanylyl cyclase 2 (1108 aa).

Positions 1 to 50 are cleaved as a signal peptide; the sequence is MFLGPWPFSRLLSWFAISSRLSGQHGLTSSKFLRYLCLLALLPLIWWGQA. Topologically, residues 51–465 are extracellular; the sequence is LPYKIGVIGP…QGKICQGGID (415 aa). Residues Cys-104 and Cys-132 are joined by a disulfide bond. A helical membrane pass occupies residues 466–490; sequence PALAMMVCFALLLALLSINGFAYFI. Over 491–1108 the chain is Cytoplasmic; the sequence is RRRINKIQLI…AERQLVRNKP (618 aa). One can recognise a Protein kinase domain in the interval 532-812; the sequence is FQIISEVQSG…DEIFNQFKTF (281 aa). The Guanylate cyclase domain maps to 884-1014; the sequence is TLYFSDIVGF…DTVNTASRME (131 aa).

The protein belongs to the adenylyl cyclase class-4/guanylyl cyclase family. As to quaternary structure, homodimer. Interacts with RD3; promotes the exit of GUCY2F from the endoplasmic reticulum and its trafficking to the photoreceptor outer segments. In terms of processing, there are 9 conserved cysteine residues in sensory guanylate cyclases, 6 in the extracellular domain, which may be involved in intra- or interchain disulfide bonds. As to expression, expressed only in the eye.

The protein localises to the membrane. The protein resides in the photoreceptor outer segment membrane. It carries out the reaction GTP = 3',5'-cyclic GMP + diphosphate. Activated by GUCA1B when free calcium ions concentration is low, and inhibited by GUCA1B when free calcium ions concentration is high. Inhibited by RD3. Responsible for the synthesis of cyclic GMP (cGMP) in rods and cones of photoreceptors. Plays an essential role in phototransduction, by mediating cGMP replenishment. May also participate in the trafficking of membrane-asociated proteins to the photoreceptor outer segment membrane. This is Retinal guanylyl cyclase 2 (Gucy2f) from Rattus norvegicus (Rat).